Reading from the N-terminus, the 455-residue chain is Peroxisomal membrane protein PEX3 (455 aa).

Over residues 113–125 (TVLSDDFSTSQEG) the composition is skewed to polar residues. The disordered stretch occupies residues 113–135 (TVLSDDFSTSQEGAISEDTNKPP). The chain crosses the membrane as a helical span at residues 155 to 171 (FLTLIYCESLLIVFLHL).

It belongs to the peroxin-3 family. Component of the peroxisomal docking complex, composed of at least PEX3, PEX13, PEX14 and PEX17. Component of the peroxisomal translocation complex, composed of at least PEX3, PEX2, PEX10 and PEX12. Interacts with PEX19. Interacts with the pexophagy receptor ATG30.

It localises to the peroxisome membrane. Peroxisomal membrane protein required for peroxisome biosynthesis. Shared component of both the peroxisomal docking complex and the peroxisomal translocation complex. The two types of peroxisomal matrix targeting signals, PTS1 and PTS2, are first recognized in the cytosol by their receptors PEX5 and PEX7, respectively, which then carry the cargo to the peroxisomal membrane. The peroxisomal targeting signal (PTS) receptor-cargo complexes interact with peroxisomal membrane protein (PMP) components of the docking complex. They have then additional downstream interactions with the translocation complex, leading to the transport of fully folded and oligomerized cargo into the peroxisome matrix. PEX3 acts as an anchoring site for PEX19 on the peroxisomal membrane and thus plays a crucial role in the assembly of the peroxisomal translocation complex. Is also essential for the interaction between the two complexes. Finally. PEX3 activates selective autophagy of peroxisomes (pexophagy) via interaction with the pexophagy receptor ATG30. The chain is Peroxisomal membrane protein PEX3 from Komagataella pastoris (Yeast).